We begin with the raw amino-acid sequence, 305 residues long: UDP-N-acetylenolpyruvoylglucosamine reductase 2 (305 aa).

In terms of domain architecture, FAD-binding PCMH-type spans 33–197 (VGGKADVFVA…LEARFELEEG (165 aa)). Arg-176 is a catalytic residue. The active-site Proton donor is Ser-226. Residue Glu-296 is part of the active site.

Belongs to the MurB family. FAD serves as cofactor.

The protein localises to the cytoplasm. It carries out the reaction UDP-N-acetyl-alpha-D-muramate + NADP(+) = UDP-N-acetyl-3-O-(1-carboxyvinyl)-alpha-D-glucosamine + NADPH + H(+). It functions in the pathway cell wall biogenesis; peptidoglycan biosynthesis. Functionally, cell wall formation. This Bacillus cereus (strain ATCC 10987 / NRS 248) protein is UDP-N-acetylenolpyruvoylglucosamine reductase 2.